The primary structure comprises 268 residues: DNA repair protein RecO (268 aa).

The protein belongs to the RecO family.

Involved in DNA repair and RecF pathway recombination. In Parasynechococcus marenigrum (strain WH8102), this protein is DNA repair protein RecO.